The primary structure comprises 186 residues: Elongation factor P (186 aa).

Belongs to the elongation factor P family.

The protein resides in the cytoplasm. The protein operates within protein biosynthesis; polypeptide chain elongation. Involved in peptide bond synthesis. Stimulates efficient translation and peptide-bond synthesis on native or reconstituted 70S ribosomes in vitro. Probably functions indirectly by altering the affinity of the ribosome for aminoacyl-tRNA, thus increasing their reactivity as acceptors for peptidyl transferase. The sequence is that of Elongation factor P from Thiobacillus denitrificans (strain ATCC 25259 / T1).